The following is a 462-amino-acid chain: GTPase Der (462 aa).

2 EngA-type G domains span residues 2-164 and 198-369; these read QKVI…EEKV and IRVG…KNYT. Residues 8–15, 55–59, 116–119, 204–211, 251–255, and 315–318 each bind GTP; these read GKPNVGKS, DSGGL, NKID, GRVNVGKS, DTAGI, and NKWD. Residues 370 to 454 form the KH-like domain; that stretch reads QKIQTSKLNE…PIVLIPKKRG (85 aa).

Belongs to the TRAFAC class TrmE-Era-EngA-EngB-Septin-like GTPase superfamily. EngA (Der) GTPase family. In terms of assembly, associates with the 50S ribosomal subunit.

Its function is as follows. GTPase that plays an essential role in the late steps of ribosome biogenesis. The sequence is that of GTPase Der from Campylobacter concisus (strain 13826).